The chain runs to 142 residues: Hemoglobin subunit alpha-A (142 aa).

Positions 2 to 142 (VLSAADKTNV…VGTVLTAKYR (141 aa)) constitute a Globin domain. H59 is a binding site for O2. H88 is a binding site for heme b.

Belongs to the globin family. Heterotetramer of two alpha chains and two beta chains. Red blood cells.

Its function is as follows. Involved in oxygen transport from the lung to the various peripheral tissues. The chain is Hemoglobin subunit alpha-A (HBAA) from Coturnix japonica (Japanese quail).